Reading from the N-terminus, the 58-residue chain is Temporin-1Th (58 aa).

The N-terminal stretch at 1 to 22 is a signal peptide; the sequence is MFTLKKSLLLLFFLGTINLSLC. The propeptide occupies 23–46; it reads EEERNAEEERRDEPDERDVQVEKR. The tract at residues 25 to 46 is disordered; the sequence is ERNAEEERRDEPDERDVQVEKR. Leucine amide is present on Leu56.

In terms of tissue distribution, expressed by the skin glands.

The protein resides in the secreted. Antimicrobial peptide that renders both the outer and inner membrane of bacteria permeable to hydrophobic substances of low molecular mass. The protein is Temporin-1Th of Rana temporaria (European common frog).